Reading from the N-terminus, the 218-residue chain is 3-dehydroquinate dehydratase (218 aa).

Residues 29-31 and R56 contribute to the 3-dehydroquinate site; that span reads EFR. H116 acts as the Proton donor/acceptor in catalysis. K142 serves as the catalytic Schiff-base intermediate with substrate. R180, S200, and Q204 together coordinate 3-dehydroquinate.

This sequence belongs to the type-I 3-dehydroquinase family. In terms of assembly, homodimer.

The enzyme catalyses 3-dehydroquinate = 3-dehydroshikimate + H2O. The protein operates within metabolic intermediate biosynthesis; chorismate biosynthesis; chorismate from D-erythrose 4-phosphate and phosphoenolpyruvate: step 3/7. Involved in the third step of the chorismate pathway, which leads to the biosynthesis of aromatic amino acids. Catalyzes the cis-dehydration of 3-dehydroquinate (DHQ) and introduces the first double bond of the aromatic ring to yield 3-dehydroshikimate. In Methanococcus maripaludis (strain C7 / ATCC BAA-1331), this protein is 3-dehydroquinate dehydratase.